We begin with the raw amino-acid sequence, 538 residues long: Phosphoenolpyruvate carboxykinase (ATP) (538 aa).

Residues R64, Y205, and K211 each contribute to the substrate site. ATP is bound by residues K211, H230, and 246-254; that span reads GLSGTGKTT. Mn(2+) is bound by residues K211 and H230. Mn(2+) is bound at residue D267. ATP contacts are provided by residues E295, R331, 447–448, and T453; that span reads RI. R331 serves as a coordination point for substrate.

Belongs to the phosphoenolpyruvate carboxykinase (ATP) family. Monomer. Mn(2+) is required as a cofactor.

The protein localises to the cytoplasm. The catalysed reaction is oxaloacetate + ATP = phosphoenolpyruvate + ADP + CO2. It functions in the pathway carbohydrate biosynthesis; gluconeogenesis. In terms of biological role, involved in the gluconeogenesis. Catalyzes the conversion of oxaloacetate (OAA) to phosphoenolpyruvate (PEP) through direct phosphoryl transfer between the nucleoside triphosphate and OAA. The protein is Phosphoenolpyruvate carboxykinase (ATP) of Pasteurella multocida (strain Pm70).